Here is a 36-residue protein sequence, read N- to C-terminus: Thrombin (36 aa).

A Peptidase S1 domain is found at 19 to 36 (IVKGIDAEVASAPMQVML).

This sequence belongs to the peptidase S1 family. Forms a heterodimer with SERPINA5. The gamma-carboxyglutamyl residues, which bind calcium ions, result from the carboxylation of glutamyl residues by a microsomal enzyme, the vitamin K-dependent carboxylase. The modified residues are necessary for the calcium-dependent interaction with a negatively charged phospholipid surface, which is essential for the conversion of prothrombin to thrombin. Post-translationally, N-glycosylated. As to expression, expressed by the liver and secreted in plasma.

The protein localises to the secreted. It carries out the reaction Selective cleavage of Arg-|-Gly bonds in fibrinogen to form fibrin and release fibrinopeptides A and B.. With respect to regulation, inhibited by SERPINA5. Functionally, thrombin, which cleaves bonds after Arg and Lys, converts fibrinogen to fibrin and activates factors V, VII, VIII, XIII, and, in complex with thrombomodulin, protein C. Functions in blood homeostasis, inflammation and wound healing. This is Thrombin from Salmo salar (Atlantic salmon).